Reading from the N-terminus, the 222-residue chain is 2-C-methyl-D-erythritol 4-phosphate cytidylyltransferase (222 aa).

It belongs to the IspD/TarI cytidylyltransferase family. IspD subfamily.

The enzyme catalyses 2-C-methyl-D-erythritol 4-phosphate + CTP + H(+) = 4-CDP-2-C-methyl-D-erythritol + diphosphate. Its pathway is isoprenoid biosynthesis; isopentenyl diphosphate biosynthesis via DXP pathway; isopentenyl diphosphate from 1-deoxy-D-xylulose 5-phosphate: step 2/6. In terms of biological role, catalyzes the formation of 4-diphosphocytidyl-2-C-methyl-D-erythritol from CTP and 2-C-methyl-D-erythritol 4-phosphate (MEP). The sequence is that of 2-C-methyl-D-erythritol 4-phosphate cytidylyltransferase from Thermotoga neapolitana (strain ATCC 49049 / DSM 4359 / NBRC 107923 / NS-E).